The chain runs to 93 residues: Protein salt-induced and EIN3/EIL1-dependent 1 (93 aa).

The segment covering 23-36 (SSLLTESSSSSLCS) has biased composition (low complexity). The segment at 23-46 (SSLLTESSSSSLCSEEAEGGGGEA) is disordered.

Its activity is regulated as follows. Triggered by EIN3. In terms of biological role, involved in ethylene-dependent salt stress responses by reducing reactive oxygen species (ROS) accumulation. This Arabidopsis thaliana (Mouse-ear cress) protein is Protein salt-induced and EIN3/EIL1-dependent 1.